Reading from the N-terminus, the 389-residue chain is Metal tolerance protein 2 (389 aa).

Over 1 to 81 (MGFRLAHLAA…GGEASERIFR (81 aa)) the chain is Cytoplasmic. Residues 82-102 (LGLAADVVLTVGKAVTGYLSG) form a helical membrane-spanning segment. Residues 103–104 (ST) are Vacuolar-facing. Residues 105–125 (AIAADAAHSLSDIVLSGVALL) form a helical membrane-spanning segment. Over 126-148 (SYKAAKAPRDKEHPYGHGKFESL) the chain is Cytoplasmic. The chain crosses the membrane as a helical span at residues 149 to 169 (GALGISSMLLVTAGGIAWHAF). Over 170–206 (DVLQGVMSSAPDIIGNVSHAHHSHGSSGHHHGIDLEH) the chain is Vacuolar. Residues 207–227 (PILALSVTAFAISVKEGLYWI) traverse the membrane as a helical segment. Over 228 to 250 (TKRAGEKEGSGLMKANAWHHRSD) the chain is Cytoplasmic. Residues 251–271 (AISSVVALLGVGGSILGVPYL) form a helical membrane-spanning segment. Residues 272–275 (DPLA) are Vacuolar-facing. A helical membrane pass occupies residues 276-296 (GLVVSGMILKAGVHTGYESVL). Residues 297–389 (ELVDAAVDPS…SLQPLNQNAL (93 aa)) lie on the Cytoplasmic side of the membrane.

Belongs to the cation diffusion facilitator (CDF) transporter (TC 2.A.4) family. SLC30A subfamily.

Its subcellular location is the vacuole membrane. Functionally, involved in sequestration of excess metal in the cytoplasm into vacuoles to maintain metal homeostasis. The protein is Metal tolerance protein 2 (MTP2) of Oryza sativa subsp. japonica (Rice).